The chain runs to 343 residues: Tetraacyldisaccharide 4'-kinase (343 aa).

65 to 72 (HAGGTGKT) serves as a coordination point for ATP.

It belongs to the LpxK family.

The enzyme catalyses a lipid A disaccharide + ATP = a lipid IVA + ADP + H(+). It functions in the pathway glycolipid biosynthesis; lipid IV(A) biosynthesis; lipid IV(A) from (3R)-3-hydroxytetradecanoyl-[acyl-carrier-protein] and UDP-N-acetyl-alpha-D-glucosamine: step 6/6. Transfers the gamma-phosphate of ATP to the 4'-position of a tetraacyldisaccharide 1-phosphate intermediate (termed DS-1-P) to form tetraacyldisaccharide 1,4'-bis-phosphate (lipid IVA). This Neisseria gonorrhoeae (strain ATCC 700825 / FA 1090) protein is Tetraacyldisaccharide 4'-kinase.